Here is a 220-residue protein sequence, read N- to C-terminus: Uracil-DNA glycosylase (220 aa).

The active-site Proton acceptor is the Asp-65.

This sequence belongs to the uracil-DNA glycosylase (UDG) superfamily. UNG family.

The protein resides in the cytoplasm. It carries out the reaction Hydrolyzes single-stranded DNA or mismatched double-stranded DNA and polynucleotides, releasing free uracil.. Functionally, excises uracil residues from the DNA which can arise as a result of misincorporation of dUMP residues by DNA polymerase or due to deamination of cytosine. The sequence is that of Uracil-DNA glycosylase from Azobacteroides pseudotrichonymphae genomovar. CFP2.